Consider the following 433-residue polypeptide: MTIYHFVGIKGTGMSALAQVLHDMKCVVQGSDYDKRFFTQEALEARGIPIFPFSAQNIRENMVVIAGNAFPDTHEEIVAARELGVPVIRYHQFLGDFLQKFTSIAVTGAHGKTSTTGLLAHVMQGAKPTSYLIGDGSGKGREGSEYFVFEACEYRRHFLAYSPDYAIMTNIDFDHPDYFANIEDVFSAFQQMAWQVKKGIIACGDDEYLQKIQAKVPVVFYGFGEDNDFQARNIVKTPEGTSFDVFVRHTFFASFHIPRYGDHNVLNALAVIALCHYEGIDVNIIQERLKTFPGVKRRFHEKMLGSQVLIDDYAHHPTEIRATIEAARQKYPERQIVAIFQPHTYTRTQTFLDEFAESLSLADAVYLCDIFSSAREHQGKLSIEDLRAKIEGAKLLDEEQVDVLKQHDNAVLIFMGAGDIQKFQEKYEQSVHV.

Gly108–Ser114 contacts ATP.

This sequence belongs to the MurCDEF family.

The protein resides in the cytoplasm. The catalysed reaction is UDP-N-acetyl-alpha-D-muramate + L-alanine + ATP = UDP-N-acetyl-alpha-D-muramoyl-L-alanine + ADP + phosphate + H(+). The protein operates within cell wall biogenesis; peptidoglycan biosynthesis. Functionally, cell wall formation. This is UDP-N-acetylmuramate--L-alanine ligase from Anoxybacillus flavithermus (strain DSM 21510 / WK1).